Reading from the N-terminus, the 411-residue chain is Citrate synthase (411 aa).

Active-site residues include His-304 and Asp-363.

It belongs to the citrate synthase family.

The enzyme catalyses oxaloacetate + acetyl-CoA + H2O = citrate + CoA + H(+). Its pathway is carbohydrate metabolism; tricarboxylic acid cycle; isocitrate from oxaloacetate: step 1/2. This is Citrate synthase (gltA) from Rickettsia conorii subsp. caspia (strain A-167) (Astrakhan rickettsia).